The chain runs to 231 residues: Orotidine 5'-phosphate decarboxylase (231 aa).

Residues Asp12, Lys34, 61 to 70 (DMKLLDIDNT), Thr116, Arg177, Gln186, Gly206, and Arg207 each bind substrate. Lys63 functions as the Proton donor in the catalytic mechanism.

This sequence belongs to the OMP decarboxylase family. Type 1 subfamily. Homodimer.

The enzyme catalyses orotidine 5'-phosphate + H(+) = UMP + CO2. It functions in the pathway pyrimidine metabolism; UMP biosynthesis via de novo pathway; UMP from orotate: step 2/2. Functionally, catalyzes the decarboxylation of orotidine 5'-monophosphate (OMP) to uridine 5'-monophosphate (UMP). The chain is Orotidine 5'-phosphate decarboxylase from Allorhizobium ampelinum (strain ATCC BAA-846 / DSM 112012 / S4) (Agrobacterium vitis (strain S4)).